The chain runs to 354 residues: Guanine nucleotide-binding protein alpha-3 subunit (354 aa).

Residue Gly-2 is the site of N-myristoyl glycine attachment. Cys-4 carries S-palmitoyl cysteine lipidation. In terms of domain architecture, G-alpha spans 33 to 354 (KECKILLLGS…TNALKDSGIL (322 aa)). The interval 36–49 (KILLLGSGESGKST) is G1 motif. GTP contacts are provided by residues 41–48 (GSGESGKS), 177–183 (LRARSKT), 202–206 (DVGGQ), 271–274 (NKID), and Ala-326. Positions 48 and 183 each coordinate Mg(2+). Positions 175–183 (DVLRARSKT) are G2 motif. A G3 motif region spans residues 198–207 (IHLFDVGGQR). Positions 267–274 (ILFLNKID) are G4 motif. The G5 motif stretch occupies residues 324 to 329 (TQATDT).

This sequence belongs to the G-alpha family. As to quaternary structure, g proteins are composed of 3 units; alpha, beta and gamma. The alpha chain contains the guanine nucleotide binding site.

Guanine nucleotide-binding proteins (G proteins) are involved as modulators or transducers in various transmembrane signaling systems. GPA3 plays an active role in transmission of the pheromone signal. The chain is Guanine nucleotide-binding protein alpha-3 subunit (GPA3) from Mycosarcoma maydis (Corn smut fungus).